We begin with the raw amino-acid sequence, 161 residues long: Ribosomal RNA large subunit methyltransferase H (161 aa).

S-adenosyl-L-methionine contacts are provided by residues L78, G110, and 129 to 134; that span reads LSRLTF.

Belongs to the RNA methyltransferase RlmH family. In terms of assembly, homodimer.

It is found in the cytoplasm. The enzyme catalyses pseudouridine(1915) in 23S rRNA + S-adenosyl-L-methionine = N(3)-methylpseudouridine(1915) in 23S rRNA + S-adenosyl-L-homocysteine + H(+). Its function is as follows. Specifically methylates the pseudouridine at position 1915 (m3Psi1915) in 23S rRNA. The protein is Ribosomal RNA large subunit methyltransferase H of Heliobacterium modesticaldum (strain ATCC 51547 / Ice1).